The sequence spans 235 residues: tRNA (guanine-N(1)-)-methyltransferase (235 aa).

Residues glycine 114 and 134–139 (IGDYIL) contribute to the S-adenosyl-L-methionine site.

The protein belongs to the RNA methyltransferase TrmD family. Homodimer.

Its subcellular location is the cytoplasm. It carries out the reaction guanosine(37) in tRNA + S-adenosyl-L-methionine = N(1)-methylguanosine(37) in tRNA + S-adenosyl-L-homocysteine + H(+). Specifically methylates guanosine-37 in various tRNAs. This chain is tRNA (guanine-N(1)-)-methyltransferase, found in Ehrlichia ruminantium (strain Welgevonden).